A 456-amino-acid polypeptide reads, in one-letter code: Phosphomethylpyrimidine synthase (456 aa).

Residues asparagine 80, methionine 109, tyrosine 139, histidine 175, 195 to 197, 236 to 239, and glutamate 275 each bind substrate; these read SRG and DSLR. Histidine 279 is a Zn(2+) binding site. Tyrosine 302 is a binding site for substrate. Histidine 343 contacts Zn(2+). 3 residues coordinate [4Fe-4S] cluster: cysteine 423, cysteine 426, and cysteine 431.

The protein belongs to the ThiC family. It depends on [4Fe-4S] cluster as a cofactor.

It carries out the reaction 5-amino-1-(5-phospho-beta-D-ribosyl)imidazole + S-adenosyl-L-methionine = 4-amino-2-methyl-5-(phosphooxymethyl)pyrimidine + CO + 5'-deoxyadenosine + formate + L-methionine + 3 H(+). It participates in cofactor biosynthesis; thiamine diphosphate biosynthesis. Functionally, catalyzes the synthesis of the hydroxymethylpyrimidine phosphate (HMP-P) moiety of thiamine from aminoimidazole ribotide (AIR) in a radical S-adenosyl-L-methionine (SAM)-dependent reaction. This chain is Phosphomethylpyrimidine synthase, found in Prochlorococcus marinus (strain MIT 9515).